We begin with the raw amino-acid sequence, 127 residues long: MTITMLKSKIHRATVTEANLNYVGSITIDKYLMDKANILEYEKVQIVDIDNGNRFETYVIAGEKHSDVICLNGAAARMVQKGDKIIIMSYCSLTIDEANKFNPTVLFVDNKNNIEKLTNYEKHGEII.

Catalysis depends on Ser-25, which acts as the Schiff-base intermediate with substrate; via pyruvic acid. Ser-25 is modified (pyruvic acid (Ser)). Thr-57 lines the substrate pocket. Residue Tyr-58 is the Proton donor of the active site. 73–75 (GAA) serves as a coordination point for substrate.

It belongs to the PanD family. In terms of assembly, heterooctamer of four alpha and four beta subunits. Pyruvate serves as cofactor. Post-translationally, is synthesized initially as an inactive proenzyme, which is activated by self-cleavage at a specific serine bond to produce a beta-subunit with a hydroxyl group at its C-terminus and an alpha-subunit with a pyruvoyl group at its N-terminus.

It localises to the cytoplasm. The catalysed reaction is L-aspartate + H(+) = beta-alanine + CO2. Its pathway is cofactor biosynthesis; (R)-pantothenate biosynthesis; beta-alanine from L-aspartate: step 1/1. In terms of biological role, catalyzes the pyruvoyl-dependent decarboxylation of aspartate to produce beta-alanine. In Clostridium botulinum (strain ATCC 19397 / Type A), this protein is Aspartate 1-decarboxylase.